Here is a 119-residue protein sequence, read N- to C-terminus: Dihydroneopterin aldolase (119 aa).

Substrate-binding positions include Glu-21, Tyr-53, and Ile-72–Asp-73. The active-site Proton donor/acceptor is the Lys-99.

The protein belongs to the DHNA family.

It catalyses the reaction 7,8-dihydroneopterin = 6-hydroxymethyl-7,8-dihydropterin + glycolaldehyde. The protein operates within cofactor biosynthesis; tetrahydrofolate biosynthesis; 2-amino-4-hydroxy-6-hydroxymethyl-7,8-dihydropteridine diphosphate from 7,8-dihydroneopterin triphosphate: step 3/4. Functionally, catalyzes the conversion of 7,8-dihydroneopterin to 6-hydroxymethyl-7,8-dihydropterin. This chain is Dihydroneopterin aldolase (folB), found in Streptococcus pyogenes.